We begin with the raw amino-acid sequence, 156 residues long: Oleosin Zm-I (156 aa).

The tract at residues 1-30 (MADHHRGATGGGGGYGDLQRGGGMHGEAQQ) is disordered. At A2 the chain carries N-acetylalanine. Residues 2-42 (ADHHRGATGGGGGYGDLQRGGGMHGEAQQQQKQGAMMTALK) are polar. Residues 8–25 (ATGGGGGYGDLQRGGGMH) show a composition bias toward gly residues. The tract at residues 43-114 (AATAATFGGS…AALSVFSWMY (72 aa)) is hydrophobic. Helical transmembrane passes span 51–71 (GSML…LTVA) and 95–115 (GFVT…WMYK).

It belongs to the oleosin family. The N-terminus is blocked.

The protein localises to the lipid droplet. Its subcellular location is the membrane. Its function is as follows. May have a structural role to stabilize the lipid body during desiccation of the seed by preventing coalescence of the oil. Probably interacts with both lipid and phospholipid moieties of lipid bodies. May also provide recognition signals for specific lipase anchorage in lipolysis during seedling growth. In Zea mays (Maize), this protein is Oleosin Zm-I (OLE16).